A 79-amino-acid chain; its full sequence is Small ribosomal subunit protein bS16c (79 aa).

Belongs to the bacterial ribosomal protein bS16 family.

Its subcellular location is the plastid. The protein resides in the chloroplast. This Staurastrum punctulatum (Green alga) protein is Small ribosomal subunit protein bS16c.